The primary structure comprises 263 residues: GTP cyclohydrolase FolE2 (263 aa).

It belongs to the GTP cyclohydrolase IV family.

The catalysed reaction is GTP + H2O = 7,8-dihydroneopterin 3'-triphosphate + formate + H(+). It functions in the pathway cofactor biosynthesis; 7,8-dihydroneopterin triphosphate biosynthesis; 7,8-dihydroneopterin triphosphate from GTP: step 1/1. Functionally, converts GTP to 7,8-dihydroneopterin triphosphate. The protein is GTP cyclohydrolase FolE2 of Nitrosospira multiformis (strain ATCC 25196 / NCIMB 11849 / C 71).